A 400-amino-acid chain; its full sequence is Argininosuccinate synthase (400 aa).

8-16 serves as a coordination point for ATP; that stretch reads AYSGGLDTS. Tyrosine 87 is an L-citrulline binding site. Glycine 117 contributes to the ATP binding site. L-aspartate is bound by residues threonine 119, asparagine 123, and aspartate 124. Residue asparagine 123 participates in L-citrulline binding. L-citrulline contacts are provided by arginine 127, serine 175, glutamate 260, and tyrosine 272.

Belongs to the argininosuccinate synthase family. Type 1 subfamily. In terms of assembly, homotetramer.

The protein resides in the cytoplasm. It carries out the reaction L-citrulline + L-aspartate + ATP = 2-(N(omega)-L-arginino)succinate + AMP + diphosphate + H(+). Its pathway is amino-acid biosynthesis; L-arginine biosynthesis; L-arginine from L-ornithine and carbamoyl phosphate: step 2/3. This Mycobacterium sp. (strain KMS) protein is Argininosuccinate synthase.